Consider the following 2531-residue polypeptide: Neurogenic locus notch homolog protein 1 (2531 aa).

An N-terminal signal peptide occupies residues 1–18 (MPRLLAPLLCLTLLPALA). The Extracellular segment spans residues 19-1725 (ARGLRCSQPS…VEPPLPSQLH (1707 aa)). EGF-like domains are found at residues 20-58 (RGLR…QRCQ), 59-99 (DPSP…PLCL), 102-139 (LANA…KSCQ), and 140-176 (QADP…PTCR). 33 cysteine pairs are disulfide-bonded: Cys24/Cys37, Cys31/Cys46, Cys48/Cys57, Cys63/Cys74, Cys68/Cys87, Cys89/Cys98, Cys106/Cys117, Cys111/Cys127, Cys129/Cys138, Cys144/Cys155, Cys149/Cys164, Cys166/Cys175, Cys182/Cys195, Cys189/Cys204, Cys206/Cys215, Cys222/Cys233, Cys227/Cys243, Cys245/Cys254, Cys261/Cys272, Cys266/Cys281, Cys283/Cys292, Cys299/Cys312, Cys306/Cys321, Cys323/Cys332, Cys339/Cys350, Cys344/Cys359, Cys361/Cys370, Cys376/Cys387, Cys381/Cys398, Cys400/Cys409, Cys416/Cys429, Cys423/Cys438, and Cys440/Cys449. A glycan (N-linked (GlcNAc...) asparagine) is linked at Asn41. Ser65 is a glycosylation site (O-linked (Glc...) serine). O-linked (Fuc...) threonine glycosylation is present at Thr73. Thr116 carries an O-linked (Fuc...) threonine glycan. O-linked (Glc...) serine glycosylation occurs at Ser146. Positions 178–216 (DVNECSQNPGLCRHGGTCHNEIGSYRCACRATHTGPHCE) constitute an EGF-like 5; calcium-binding domain. An O-linked (Fuc...) threonine glycan is attached at Thr194. Positions 218 to 255 (PYVPCSPSPCQNGGTCRPTGDTTHECACLPGFAGQNCE) constitute an EGF-like 6 domain. Thr232 is a glycosylation site (O-linked (Fuc...) threonine; alternate). A glycan (O-linked (GalNAc...) threonine; alternate) is linked at Thr232. Residues 257–293 (NVDDCPGNNCKNGGACVDGVNTYNCRCPPEWTGQYCT) form the EGF-like 7; calcium-binding domain. Positions 295–333 (DVDECQLMPNACQNGGTCHNSHGGYNCVCVNGWTGEDCS) constitute an EGF-like 8; calcium-binding domain. Residue Thr311 is glycosylated (O-linked (Fuc...) threonine). In terms of domain architecture, EGF-like 9; calcium-binding spans 335–371 (NIDDCASAACFQGATCHDRVASFYCECPHGRTGLLCH). The O-linked (Glc...) serine glycan is linked to Ser341. Thr349 carries an O-linked (Fuc...) threonine glycan. Positions 372-410 (LNDACISNPCNEGSNCDTNPVNGKAICTCPSGYTGPACS) constitute an EGF-like 10 domain. The O-linked (Glc...) serine glycan is linked to Ser378. An EGF-like 11; calcium-binding domain is found at 412–450 (DVDECALGANPCEHAGKCLNTLGSFECQCLQGYTGPRCE). Positions 420-421 (AN) are interaction with DLL4. Positions 432 and 435 each coordinate Ca(2+). Ser435 is a glycosylation site (O-linked (Glc...) serine). The segment at 448–452 (RCEID) is interaction with DLL4. The Ca(2+) site is built by Asp452, Val453, and Glu455. In terms of domain architecture, EGF-like 12; calcium-binding spans 452 to 488 (DVNECISNPCQNDATCLDQIGEFQCICMPGYEGVYCE). Cystine bridges form between Cys456–Cys467, Cys461–Cys476, and Cys478–Cys487. O-linked (Glc...) serine glycosylation is present at Ser458. Thr466 carries an O-linked (Fuc...) threonine glycan. Ca(2+) contacts are provided by Asp469 and Gln470. Asn490, Thr491, and Glu493 together coordinate Ca(2+). One can recognise an EGF-like 13; calcium-binding domain in the interval 490–526 (NTDECASSPCLHNGRCVDKINEFLCQCPKGFSGHLCQ). 75 disulfide bridges follow: Cys494–Cys505, Cys499–Cys514, Cys516–Cys525, Cys532–Cys543, Cys537–Cys552, Cys554–Cys563, Cys570–Cys580, Cys575–Cys589, Cys591–Cys600, Cys607–Cys618, Cys612–Cys627, Cys629–Cys638, Cys645–Cys655, Cys650–Cys664, Cys666–Cys675, Cys682–Cys693, Cys687–Cys702, Cys704–Cys713, Cys720–Cys730, Cys725–Cys739, Cys741–Cys750, Cys757–Cys768, Cys762–Cys777, Cys779–Cys788, Cys795–Cys806, Cys800–Cys815, Cys817–Cys826, Cys833–Cys844, Cys838–Cys855, Cys857–Cys866, Cys873–Cys884, Cys878–Cys893, Cys895–Cys904, Cys911–Cys922, Cys916–Cys931, Cys933–Cys942, Cys949–Cys960, Cys954–Cys969, Cys971–Cys980, Cys987–Cys998, Cys992–Cys1007, Cys1009–Cys1018, Cys1025–Cys1036, Cys1030–Cys1045, Cys1047–Cys1056, Cys1063–Cys1074, Cys1068–Cys1083, Cys1085–Cys1094, Cys1101–Cys1122, Cys1116–Cys1131, Cys1133–Cys1142, Cys1149–Cys1160, Cys1154–Cys1169, Cys1171–Cys1180, Cys1187–Cys1198, Cys1192–Cys1207, Cys1209–Cys1218, Cys1225–Cys1244, Cys1238–Cys1253, Cys1255–Cys1264, Cys1271–Cys1284, Cys1276–Cys1293, Cys1295–Cys1304, Cys1311–Cys1322, Cys1316–Cys1334, Cys1336–Cys1345, Cys1352–Cys1363, Cys1357–Cys1372, Cys1374–Cys1383, Cys1391–Cys1403, Cys1397–Cys1414, Cys1416–Cys1425, Cys1449–Cys1472, Cys1454–Cys1467, and Cys1463–Cys1479. Residue Ser496 is glycosylated (O-linked (Glc...) serine). The Ca(2+) site is built by Asp507 and Lys508. An EGF-like 14; calcium-binding domain is found at 528–564 (DVDECASTPCKNGAKCLDGPNTYTCVCTEGYTGTHCE). Ser534 is a glycosylation site (O-linked (Glc...) serine). In terms of domain architecture, EGF-like 15; calcium-binding spans 566–601 (DIDECDPDPCHYGLCKDGVATFTCLCQPGYTGHHCE). The EGF-like 16; calcium-binding domain maps to 603 to 639 (NINECHSQPCRHGGTCQDRDNYYLCLCLKGTTGPNCE). O-linked (Glc...) serine glycosylation occurs at Ser609. Thr617 carries an O-linked (Fuc...) threonine glycan. The 36-residue stretch at 641 to 676 (NLDDCASNPCDSGTCLDKIDGYECACEPGYTGSMCN) folds into the EGF-like 17; calcium-binding domain. An O-linked (Glc...) serine glycan is attached at Ser647. The region spanning 678 to 714 (NIDECAGSPCHNGGTCEDGIAGFTCRCPEGYHDPTCL) is the EGF-like 18; calcium-binding domain. A glycan (O-linked (Fuc...) threonine) is linked at Thr692. Residues 716 to 751 (EVNECNSNPCIHGACRDGLNGYKCDCAPGWSGTNCD) form the EGF-like 19; calcium-binding domain. An O-linked (Glc...) serine glycan is attached at Ser722. The region spanning 753 to 789 (NNNECESNPCVNGGTCKDMTSGYVCTCREGFSGPNCQ) is the EGF-like 20; calcium-binding domain. Ser759 carries an O-linked (Glc...) serine glycan. O-linked (Fuc...) threonine glycosylation occurs at Thr767. A glycan (O-linked (GlcNAc) serine) is linked at Ser784. One can recognise an EGF-like 21; calcium-binding domain in the interval 791 to 827 (NINECASNPCLNQGTCIDDVAGYKCNCPLPYTGATCE). O-linked (Glc...) serine glycosylation occurs at Ser797. Residue Thr805 is glycosylated (O-linked (Fuc...) threonine). In terms of domain architecture, EGF-like 22 spans 829 to 867 (VLAPCATSPCKNSGVCKESEDYESFSCVCPTGWQGQTCE). The EGF-like 23; calcium-binding domain occupies 869–905 (DINECVKSPCRHGASCQNTNGSYRCLCQAGYTGRNCE). N-linked (GlcNAc...) asparagine glycosylation occurs at Asn888. O-linked (GlcNAc) threonine glycosylation is present at Thr900. Residues 907-943 (DIDDCRPNPCHNGGSCTDGVNAAFCDCLPGFQGAFCE) form the EGF-like 24 domain. Ser921 carries an O-linked (Fuc) serine glycan. The EGF-like 25; calcium-binding domain maps to 945-981 (DINECASNPCQNGANCTDCVDSYTCTCPTGFNGIHCE). Ser951 is a glycosylation site (O-linked (Glc...) serine). Asn959 carries an N-linked (GlcNAc...) asparagine glycan. One can recognise an EGF-like 26 domain in the interval 983–1019 (NTPDCTESSCFNGGTCVDGINSFTCLCPPGFTGSYCQ). O-linked (Fuc...) threonine glycosylation occurs at Thr997. The EGF-like 27; calcium-binding domain maps to 1021–1057 (DVNECDSRPCLHGGTCQDSYGTYKCTCPQGYTGLNCQ). The O-linked (Glc...) serine glycan is linked to Ser1027. Thr1035 is a glycosylation site (O-linked (Fuc...) threonine). 2 consecutive EGF-like domains span residues 1059 to 1095 (LVRW…FNCD) and 1097 to 1143 (LSVS…SYCE). Ser1065 is a glycosylation site (O-linked (Glc...) serine). An EGF-like 30; calcium-binding domain is found at 1145 to 1181 (EVDECSPNPCQNGATCTDYLGGFSCKCVAGYHGSNCS). Thr1159 is a glycosylation site (O-linked (Fuc...) threonine). An N-linked (GlcNAc...) asparagine glycan is attached at Asn1179. One can recognise an EGF-like 31; calcium-binding domain in the interval 1183–1219 (EINECLSQPCQNGGTCIDLTNTYKCSCPRGTQGVHCE). Ser1189 carries O-linked (Glc...) serine glycosylation. Thr1197 is a glycosylation site (O-linked (Fuc...) threonine). Positions 1221–1265 (NVDDCHPPLDPASRSPKCFNNGTCVDQVGGYTCTCPPGFVGERCE) constitute an EGF-like 32; calcium-binding domain. An N-linked (GlcNAc...) asparagine glycan is attached at Asn1241. 4 EGF-like domains span residues 1267 to 1305 (DVNE…RRCE), 1307 to 1346 (VING…ATCE), 1348 to 1384 (DART…PECQ), and 1387 to 1426 (ASSP…LLCH). Ser1273 is a glycosylation site (O-linked (Glc...) serine). O-linked (Fuc...) threonine glycosylation occurs at Thr1362. A glycan (O-linked (GlcNAc...) threonine) is linked at Thr1379. O-linked (Fuc...) threonine; alternate glycosylation is present at Thr1402. Thr1402 carries O-linked (GalNAc...) threonine; alternate glycosylation. LNR repeat units lie at residues 1449–1489 (CELP…PWKN), 1490–1531 (CTQS…CNPL), and 1532–1571 (YDQY…RLAA). 4 residues coordinate Ca(2+): Asp1457, Asn1460, Asp1475, and Asp1478. Asn1489 carries N-linked (GlcNAc...) asparagine glycosylation. 5 disulfide bridges follow: Cys1490-Cys1514, Cys1496-Cys1509, Cys1505-Cys1521, Cys1536-Cys1549, and Cys1545-Cys1561. N-linked (GlcNAc...) asparagine glycosylation occurs at Asn1587. Thr1715 carries O-linked (GalNAc...) threonine glycosylation. The interaction with PSEN1 stretch occupies residues 1718 to 1750 (PPLPSQLHLMYVAAAAFVLLFFVGCGVLLSRKR). The chain crosses the membrane as a helical span at residues 1726-1746 (LMYVAAAAFVLLFFVGCGVLL). The Cytoplasmic portion of the chain corresponds to 1747 to 2531 (SRKRRRQHGQ…QITHIPEAFK (785 aa)). Lys1749 is covalently cross-linked (Glycyl lysine isopeptide (Lys-Gly) (interchain with G-Cter in ubiquitin)). The tract at residues 1770–1798 (KKKRREPLGEDSVGLKPLKNASDGALMDD) is disordered. The residue at position 1851 (Thr1851) is a Phosphothreonine. 5 ANK repeats span residues 1917–1946 (TGET…DANI), 1950–1980 (MGRT…DLDA), 1984–2013 (DGTT…DVNA), 2017–2046 (LGKS…NKDM), and 2050–2079 (KEET…NRDI). The HIF1AN-binding stretch occupies residues 1937–1945 (LLEASADAN). Residue Asn1945 is modified to (3S)-3-hydroxyasparagine; by HIF1AN. An HIF1AN-binding region spans residues 2004–2012 (LINSHADVN). (3S)-3-hydroxyasparagine; by HIF1AN is present on Asn2012. 3 disordered regions span residues 2141-2185 (SATQ…DSSS), 2382-2428 (QPQN…SLPV), and 2440-2531 (PTSL…EAFK). Low complexity predominate over residues 2382-2395 (QPQNLQPPSQPHLS). Polar residues predominate over residues 2440 to 2478 (PTSLPSSMVPPMTTTQFLTPPSQHSYSSSPVDNTPSHQL). Residues 2488-2503 (PSPESPDQWSSSSPHS) are compositionally biased toward low complexity. Positions 2504–2524 (NISDWSEGISSPPTSMPSQIT) are enriched in polar residues.

This sequence belongs to the NOTCH family. In terms of assembly, heterodimer of a C-terminal fragment N(TM) and an N-terminal fragment N(EC) which are probably linked by disulfide bonds. Interacts with DNER, DTX1, DTX2 and RBPJ/RBPSUH. Also interacts with MAML1, MAML2 and MAML3 which act as transcriptional coactivators for NOTCH1. Notch 1 intracellular domain interacts with SNW1; the interaction involves multimerized NOTCH1 NICD and is implicated in a formation of an intermediate preactivation complex which associates with DNA-bound CBF-1/RBPJ. The activated membrane-bound form interacts with AAK1 which promotes NOTCH1 stabilization. Forms a trimeric complex with FBXW7 and SGK1. Interacts with HIF1AN. HIF1AN negatively regulates the function of notch intracellular domain (NICD), accelerating myogenic differentiation. Interacts (via NICD) with SNAI1 (via zinc fingers); the interaction induces SNAI1 degradation via MDM2-mediated ubiquitination and inhibits SNAI1-induced cell invasion. Interacts (via NICD) with MDM2A. Interacts (via NICD) with BCL6; the interaction decreases MAML1 recruitment by NOTCH1 NICD on target genes DNA and inhibits NOTCH1 transactivation activity. Interacts with THBS4. Interacts (via the EGF-like repeat region) with CCN3 (via CTCK domain). Interacts (via EGF-like domains) with DLL4 (via N-terminal DSL and MNNL domains). Interacts with ZMIZ1. Interacts (via NICD domain) with MEGF10 (via the cytoplasmic domain). Interacts with DLL1 and JAG1. Interacts (via NICD domain) with PRAG1. Forms a complex with PRAG1, N1ICD and MAML1, in a MAML1-dependent manner. Interacts (via transmembrane region) with PSEN1; the interaction is direct. Interacts with ZFP64. In terms of processing, synthesized in the endoplasmic reticulum as an inactive form which is proteolytically cleaved by a furin-like convertase in the trans-Golgi network before it reaches the plasma membrane to yield an active, ligand-accessible form. Cleavage results in a C-terminal fragment N(TM) and a N-terminal fragment N(EC). Following ligand binding, it is cleaved by ADAM17 to yield a membrane-associated intermediate fragment called notch extracellular truncation (NEXT). Following endocytosis, this fragment is then cleaved by one of the catalytic subunits of gamma-secretase (PSEN1 or PSEN2) to release a Notch-derived peptide containing the intracellular domain (NICD) from the membrane. Post-translationally, phosphorylated. O-glycosylated on the EGF-like domains. O-glucosylated at Ser-435 by KDELC1 and KDELC2. Contains both O-linked fucose and O-linked glucose in the EGF-like domains 11, 12 and 13, which are interacting with the residues on DLL4. O-linked glycosylation by GALNT11 is involved in determination of left/right symmetry: glycosylation promotes activation of NOTCH1, possibly by promoting cleavage by ADAM17, modulating the balance between motile and immotile (sensory) cilia at the left-right organiser (LRO). MFNG-, RFNG- and LFNG-mediated modification of O-fucose residues at specific EGF-like domains results in inhibition of its activation by JAG1 and enhancement of its activation by DLL1 via an increased binding to DLL1. In terms of processing, ubiquitinated. Undergoes 'Lys-29'-linked polyubiquitination by ITCH; promotes the lysosomal degradation of non-activated internalized NOTCH1. Deubiquitination by USP12 is required for transport of internalized non-activated receptor from late endosomes to lysosomes for degradation. Monoubiquitination at Lys-1749 is required for activation by gamma-secretase cleavage, it promotes interaction with AAK1, which stabilizes it. Deubiquitination by EIF3F is necessary for nuclear import of activated Notch. Post-translationally, hydroxylated at Asn-1945 and Asn-2012 by HIF1AN. Hydroxylation reduces affinity for HI1AN and may thus indirectly modulate negative regulation of NICD. Expressed in the brain, kidney and spleen. Expressed in postnatal central nervous system (CNS) germinal zones and, in early postnatal life, within numerous cells throughout the CNS. Found in both subventricular and ventricular germinal zones.

Its subcellular location is the cell membrane. The protein localises to the late endosome membrane. It localises to the nucleus. Functionally, functions as a receptor for membrane-bound ligands Jagged-1 (JAG1), Jagged-2 (JAG2) and Delta-1 (DLL1) to regulate cell-fate determination. Upon ligand activation through the released notch intracellular domain (NICD) it forms a transcriptional activator complex with RBPJ/RBPSUH and activates genes of the enhancer of split locus. Affects the implementation of differentiation, proliferation and apoptotic programs. Involved in angiogenesis; negatively regulates endothelial cell proliferation and migration and angiogenic sprouting. Involved in the maturation of both CD4(+) and CD8(+) cells in the thymus. Important for follicular differentiation and possibly cell fate selection within the follicle. During cerebellar development, functions as a receptor for neuronal DNER and is involved in the differentiation of Bergmann glia. Represses neuronal and myogenic differentiation. May play an essential role in postimplantation development, probably in some aspect of cell specification and/or differentiation. May be involved in mesoderm development, somite formation and neurogenesis. May enhance HIF1A function by sequestering HIF1AN away from HIF1A. Required for the THBS4 function in regulating protective astrogenesis from the subventricular zone (SVZ) niche after injury. Involved in determination of left/right symmetry by modulating the balance between motile and immotile (sensory) cilia at the left-right organiser (LRO). The protein is Neurogenic locus notch homolog protein 1 (Notch1) of Rattus norvegicus (Rat).